Here is a 280-residue protein sequence, read N- to C-terminus: MFDMSSSSSGWVAEIYLRYQLKRGITRLIERKQVGPLMVQRPFYPEHGSSHTYLLHPPGGVVAGDLLSINVVVEEGAHSLITTPGATKFYRSIGEVARQAQNLRVEEDAFLEWLPLENIFFPSAAAILETNISLKVSSRFIGWDMLCFGRPMLNETFESGNVIGQTKIFVDDKLILADSLCVDSTKFKAAGMREFPMLGAMYIYPASEALKELVHRSIQDYLMQTKESLEIGLTDVDGLLTVRALGHQTEEIMGCLVLIWKTCRKLWLGYVPDIPRIWAT.

The protein belongs to the UreD family. As to quaternary structure, ureD, UreF and UreG form a complex that acts as a GTP-hydrolysis-dependent molecular chaperone, activating the urease apoprotein by helping to assemble the nickel containing metallocenter of UreC. The UreE protein probably delivers the nickel.

It is found in the cytoplasm. Functionally, required for maturation of urease via the functional incorporation of the urease nickel metallocenter. This is Urease accessory protein UreD from Vibrio parahaemolyticus.